Here is a 204-residue protein sequence, read N- to C-terminus: Outer-membrane lipoprotein carrier protein (204 aa).

Positions 1-21 (MKKLLVACCVVSGMMSASVLA) are cleaved as a signal peptide.

This sequence belongs to the LolA family. In terms of assembly, monomer.

It is found in the periplasm. Functionally, participates in the translocation of lipoproteins from the inner membrane to the outer membrane. Only forms a complex with a lipoprotein if the residue after the N-terminal Cys is not an aspartate (The Asp acts as a targeting signal to indicate that the lipoprotein should stay in the inner membrane). This chain is Outer-membrane lipoprotein carrier protein, found in Edwardsiella ictaluri (strain 93-146).